Reading from the N-terminus, the 457-residue chain is Transmembrane protein 143 (457 aa).

The next 2 helical transmembrane spans lie at 264–284 (ILNV…GMVV) and 285–305 (LSDL…FMGL). A Phosphoserine modification is found at Ser-316. Positions 429–439 (LSSPKSAPSDD) are enriched in polar residues. The tract at residues 429 to 457 (LSSPKSAPSDDNSLEKPLGPAQPSHLVGN) is disordered.

The protein localises to the membrane. The protein is Transmembrane protein 143 (TMEM143) of Bos taurus (Bovine).